We begin with the raw amino-acid sequence, 890 residues long: UPF0182 protein Ppro_2689 (890 aa).

The next 7 helical transmembrane spans lie at 6–26 (FILI…LLAF), 50–70 (AGSG…NLLL), 102–122 (LGIP…AMQW), 157–177 (TITA…VLVY), 200–220 (LAIL…LDCF), 244–264 (TYRI…IGLW), and 266–286 (GAWR…VIGI).

It belongs to the UPF0182 family.

The protein resides in the cell membrane. This chain is UPF0182 protein Ppro_2689, found in Pelobacter propionicus (strain DSM 2379 / NBRC 103807 / OttBd1).